We begin with the raw amino-acid sequence, 841 residues long: Alpha-glucuronidase A (841 aa).

The first 20 residues, 1–20, serve as a signal peptide directing secretion; it reads MRGSNLFQLTLALLLSLVAA. 14 N-linked (GlcNAc...) asparagine glycosylation sites follow: Asn-51, Asn-76, Asn-149, Asn-222, Asn-279, Asn-310, Asn-343, Asn-450, Asn-465, Asn-527, Asn-576, Asn-682, Asn-723, and Asn-732.

This sequence belongs to the glycosyl hydrolase 67 family.

The protein localises to the secreted. It carries out the reaction an alpha-D-glucuronoside + H2O = D-glucuronate + an alcohol. In terms of biological role, alpha-glucuronidase involved in the hydrolysis of xylan, a major structural heterogeneous polysaccharide found in plant biomass representing the second most abundant polysaccharide in the biosphere, after cellulose. Releases 4-O-methylglucuronic acid from xylan. The chain is Alpha-glucuronidase A (aguA) from Aspergillus tubingensis.